The primary structure comprises 307 residues: Dihydroorotate dehydrogenase A (fumarate) (307 aa).

FMN contacts are provided by residues S21 and K46 to T47. Substrate-binding positions include K46, N70 to L74, and N130. N130 contacts FMN. C133 functions as the Nucleophile in the catalytic mechanism. FMN contacts are provided by K168 and I194. N195–T196 contributes to the substrate binding site. FMN contacts are provided by residues G220, G246–G247, and G268–S269.

The protein belongs to the dihydroorotate dehydrogenase family. Type 1 subfamily. In terms of assembly, homodimer. The cofactor is FMN.

Its subcellular location is the cytoplasm. It catalyses the reaction (S)-dihydroorotate + fumarate = orotate + succinate. It functions in the pathway pyrimidine metabolism; UMP biosynthesis via de novo pathway. In terms of biological role, catalyzes the conversion of dihydroorotate to orotate with fumarate as the electron acceptor. This Lactobacillus delbrueckii subsp. bulgaricus (strain ATCC BAA-365 / Lb-18) protein is Dihydroorotate dehydrogenase A (fumarate) (pyrD).